The chain runs to 25 residues: Retinol-binding protein 3 (25 aa).

The protein resides in the secreted. Its subcellular location is the extracellular space. It is found in the extracellular matrix. It localises to the interphotoreceptor matrix. Functionally, IRBP shuttles 11-cis and all trans retinoids between the retinol isomerase in the pigment epithelium and the visual pigments in the photoreceptor cells of the retina. The protein is Retinol-binding protein 3 (RBP3) of Sus scrofa (Pig).